The following is a 336-amino-acid chain: Delta(1)-pyrroline-2-carboxylate reductase (336 aa).

The Charge relay system role is filled by Ser-47. Catalysis depends on His-48, which acts as the Proton donor. Arg-52 provides a ligand contact to substrate. Position 120–124 (120–124) interacts with NADP(+); the sequence is HFSAL. Residue Thr-160 coordinates substrate. 178–180 provides a ligand contact to NADP(+); that stretch reads DFA. 186–187 contributes to the substrate binding site; it reads RG. Residue Asp-188 is the Charge relay system of the active site. NADP(+) is bound by residues 229–230 and 304–310; these read HK and RLPSQRR.

The protein belongs to the LDH2/MDH2 oxidoreductase family. Homodimer.

The catalysed reaction is L-proline + NAD(+) = 1-pyrroline-2-carboxylate + NADH + H(+). It carries out the reaction L-proline + NADP(+) = 1-pyrroline-2-carboxylate + NADPH + H(+). Its function is as follows. Catalyzes the reduction of Delta(1)-pyrroline-2-carboxylate (Pyr2C) to L-proline, using NADPH as the electron donor. May be involved in a degradation pathway that converts trans-3-hydroxy-L-proline (t3LHyp) to L-proline. This chain is Delta(1)-pyrroline-2-carboxylate reductase, found in Pseudomonas fluorescens (strain ATCC BAA-477 / NRRL B-23932 / Pf-5).